Here is a 1097-residue protein sequence, read N- to C-terminus: Nitric oxide synthase-like protein (1097 aa).

A heme b-binding site is contributed by cysteine 77. Residues glutamine 140, tryptophan 249, tyrosine 250, glutamate 254, and asparagine 259 each contribute to the L-arginine site. Residues tryptophan 340 and phenylalanine 353 each contribute to the (6R)-L-erythro-5,6,7,8-tetrahydrobiopterin site. Residue tyrosine 368 participates in heme b binding. The interval lysine 387–phenylalanine 410 is calmodulin-binding. Residues alanine 420–phenylalanine 615 form the Flavodoxin-like domain. FMN-binding positions include threonine 426–lysine 430 and valine 561–histidine 592. The FAD-binding FR-type domain occupies lysine 669–proline 914. Residues tyrosine 704 to cysteine 715 and leucine 847 to serine 857 each bind FAD. Residues isoleucine 922–arginine 940 and glycine 1019–valine 1034 contribute to the NADP(+) site.

The protein belongs to the NOS family. Heme b serves as cofactor. It depends on FAD as a cofactor. Requires FMN as cofactor.

The enzyme catalyses 2 L-arginine + 3 NADPH + 4 O2 + H(+) = 2 L-citrulline + 2 nitric oxide + 3 NADP(+) + 4 H2O. Its function is as follows. Produces nitric oxide (NO) which is a messenger molecule with diverse functions throughout the body. The sequence is that of Nitric oxide synthase-like protein from Bombyx mori (Silk moth).